Reading from the N-terminus, the 2725-residue chain is Teneurin-1 (2725 aa).

The tract at residues 1–48 is disordered; sequence MEQTDCKPYQPLPKVKHEMDLAYTSSSDESEDGRKPRQSYNSRETLHE. In terms of domain architecture, Teneurin N-terminal spans 1–318; the sequence is MEQTDCKPYQ…KPYRCCNWKC (318 aa). At 1–324 the chain is on the cytoplasmic side; sequence MEQTDCKPYQ…NWKCTALSAT (324 aa). A Nuclear localization signal (NLS) motif is present at residues 62–65; sequence RKRK. S105 carries the post-translational modification Phosphoserine. T109 is subject to Phosphothreonine. S116 carries the phosphoserine modification. Positions 174–189 are enriched in polar residues; it reads AGSTQDVQSSPHNQFT. The tract at residues 174–241 is disordered; sequence AGSTQDVQSS…PAPPTSTQDS (68 aa). A compositionally biased stretch (pro residues) spans 192 to 201; that stretch reads PLPPPPPPPH. The Required for interaction with SORBS1 (Ten-1 ICD form) signature appears at 290 to 297; the sequence is PPPRPLPR. The helical transmembrane segment at 325 to 345 threads the bilayer; sequence AITVTLALLLAYVIAVHLFGL. At 346 to 2725 the chain is on the extracellular side; that stretch reads TWQLQPVEGE…FMRQSEIGRR (2380 aa). Residue N433 is glycosylated (N-linked (GlcNAc...) asparagine). 8 consecutive EGF-like domains span residues 528-559, 560-591, 592-624, 625-657, 658-691, 692-721, 722-753, and 761-796; these read IMDDCSTNCNGNGECISGHCHCFPGFLGPDCA, RDSCPVLCGGNGEYEKGHCVCRHGWKGPECDV, PEEQCIDPTCFGHGTCIMGVCICVPGYKGEICE, EEDCLDPMCSNHGICVKGECHCSTGWGGVNCET, PLPVCQEQCSGHGTFLLDAGVCSCDPKWTGSDCS, TELCTMECGSHGVCSRGICQCEEGWVGPTC, EERSCHSHCTEHGQCKDGKCECSPGWEGDHCT, and VRDGCPGLCFGNGRCTLDQNGWHCVCQVGWSGTGCN. Intrachain disulfides connect C532–C542, C536–C547, C549–C558, C567–C578, C580–C589, C596–C607, C601–C612, C614–C623, C628–C639, C633–C644, C646–C655, C666–C679, C681–C690, C695–C705, C699–C710, C712–C721, C726–C736, C730–C741, C743–C752, C765–C775, C769–C784, and C786–C795. N-linked (GlcNAc...) asparagine glycans are attached at residues N905 and N1084. NHL repeat units lie at residues 1194 to 1219, 1292 to 1336, 1351 to 1402, 1414 to 1458, and 1481 to 1524; these read LFAPVALASGPDGSVYVGDFNFVRRI, SHCG…NAVI, LSCD…IAGR, FLVS…VTTN, and CFSG…ISRN. The YD 1 repeat unit spans residues 1534-1553; the sequence is YEIASPADQELYQFTVNGTH. 2 N-linked (GlcNAc...) asparagine glycosylation sites follow: N1550 and N1567. YD repeat units lie at residues 1570 to 1590, 1608 to 1632, 1633 to 1654, and 1655 to 1675; these read YNSEGDLGAITSSNGNSVHIR, YWLTISSNGVLKRVSAQGYNLALMT, YPGNTGLLATKSNENGWTTVYE, and YDPEGHLTNATFPTGEVSSFH. N1663, N1699, N1757, N1781, and N1842 each carry an N-linked (GlcNAc...) asparagine glycan. 11 YD repeats span residues 1845-1864, 1865-1885, 1886-1904, 1905-1925, 1933-1949, 1950-1969, 1970-1989, 1992-2012, 2015-2035, 2085-2105, and 2113-2133; these read YSPSGLVTFIQRGTWNEKME, YDQSGKIISRTWADGKIWSYT, YLEKSVMLLLHSQRRYIFE, YDQPDCLLSVTMPSMVRHSLQ, YRNIYTPPDSSTSFIQD, YSRDGRLLQTLHLGTGRRVL, YKYTKQARLSEVLYDTTQVT, YEESSGVIKTIHLMHDGFICT, YRQTGPLIGRQIFRFSEEGLV, YDLNQVITTTVMKHTKIFSAN, and YEILKAIAYWMTIQYDNVGRM. N-linked (GlcNAc...) asparagine glycosylation is present at N2145. YD repeat units follow at residues 2153–2173, 2174–2194, 2196–2216, 2228–2248, and 2250–2270; these read YDADGQLQTVSVNDKTQWRYS, YDLNGNINLLSHGKSARLTPL, YDLRDRITRLGEIQYKMDEDG, YNSNGLLQKAYNKASGWTVQY, and YDGLGRRVASKSSLGQHLQFF. An N-linked (GlcNAc...) asparagine glycan is attached at N2285. YD repeat units lie at residues 2296-2313 and 2314-2337; these read YDLQGHLIAMELSSGEEY and YVACDNTGTPLAVFSSRGQVIKEI. Residue S2580 is modified to Phosphoserine. N-linked (GlcNAc...) asparagine glycosylation occurs at N2602.

It belongs to the tenascin family. Teneurin subfamily. As to quaternary structure, homodimer; disulfide-linked. Heterodimer with either TENM2 or TENM3. May also form heterodimer with TENM4. Ten-1 ICD interacts with SORBS1 (via third SH3 domain). Interacts with MBD1. Ten-1 ICD interacts with HINT1. In terms of processing, derives from the plasma membrane form by proteolytic processing. Further proteolytic cleavage may be generated. In terms of tissue distribution, expressed in fetal brain.

Its subcellular location is the cell membrane. It localises to the nucleus. The protein localises to the nucleus speckle. The protein resides in the nucleus matrix. It is found in the cytoplasm. Its subcellular location is the cytoskeleton. Involved in neural development, regulating the establishment of proper connectivity within the nervous system. May function as a cellular signal transducer. Its function is as follows. Plays a role in the regulation of neuroplasticity in the limbic system. Mediates a rapid reorganization of actin- and tubulin-based cytoskeleton elements with an increase in dendritic arborization and spine density formation of neurons in the hippocampus and amygdala. Induces BDNF transcription inhibition in neurons. Activates the mitogen-activated protein (MAP) kinase 2 (MEK2) and extracellular signal-regulated kinase (ERK) cascade. Also acts as a bioactive neuroprotective peptide on limbic neurons of the brain and regulates stress-induced behavior: attenuates alkalosis-associated necrotic cell death and the effects of corticotropin-releasing factor (CRF) on c-fos/FOS induction and on the reinstatement of cocaine seeking. In terms of biological role, induces gene transcription activation. The chain is Teneurin-1 (TENM1) from Homo sapiens (Human).